Here is a 430-residue protein sequence, read N- to C-terminus: Proteasome-activating nucleotidase (430 aa).

Residues 9–89 adopt a coiled-coil conformation; that stretch reads TELKKEKKAF…LRRELDRMRV (81 aa). ATP contacts are provided by residues 214–219 and histidine 353; that span reads GTGKTL. The segment at 428–430 is docks into pockets in the proteasome alpha-ring to cause gate opening; the sequence is LYR.

This sequence belongs to the AAA ATPase family. In terms of assembly, homohexamer. The hexameric complex has a two-ring architecture resembling a top hat that caps the 20S proteasome core at one or both ends. Alone, can form a complex composed of two stacked hexameric rings in vitro. Upon ATP-binding, the C-terminus of PAN interacts with the alpha-rings of the proteasome core by binding to the intersubunit pockets.

The protein resides in the cytoplasm. Its activity is regulated as follows. ATPase activity is inhibited by EDTA, N-ethylmaleimide (NEM) and p-chloromercuriphenyl-sulfonic acid (PCMS) in vitro. ATPase which is responsible for recognizing, binding, unfolding and translocation of substrate proteins into the archaeal 20S proteasome core particle. Is essential for opening the gate of the 20S proteasome via an interaction with its C-terminus, thereby allowing substrate entry and access to the site of proteolysis. Thus, the C-termini of the proteasomal ATPase function like a 'key in a lock' to induce gate opening and therefore regulate proteolysis. Unfolding activity requires energy from ATP hydrolysis, whereas ATP binding alone promotes ATPase-20S proteasome association which triggers gate opening, and supports translocation of unfolded substrates. In addition to ATP, is able to cleave other nucleotide triphosphates such as CTP, GTP and UTP, but hydrolysis of these other nucleotides is less effective in promoting proteolysis than ATP. Moreover, PAN by itself can function as a chaperone in vitro. This chain is Proteasome-activating nucleotidase, found in Methanocaldococcus jannaschii (strain ATCC 43067 / DSM 2661 / JAL-1 / JCM 10045 / NBRC 100440) (Methanococcus jannaschii).